The following is a 947-amino-acid chain: Testis-expressed protein 11 (947 aa).

The protein belongs to the SPO22 family. In terms of assembly, interacts with SYCP2. Interacts with PBXIP1; may prevent interaction between PBXIP1 and ESR2. Interacts with SHOC1. Interacts with REDIC1. In terms of tissue distribution, testis-specific.

It localises to the chromosome. In terms of biological role, regulator of crossing-over during meiosis. Involved in initiation and/or maintenance of chromosome synapsis and formation of crossovers. This is Testis-expressed protein 11 (Tex11) from Mus musculus (Mouse).